A 450-amino-acid chain; its full sequence is Phosphoglucosamine mutase (450 aa).

The active-site Phosphoserine intermediate is the S101. Mg(2+) is bound by residues S101, D241, D243, and D245. S101 carries the phosphoserine modification.

Belongs to the phosphohexose mutase family. Requires Mg(2+) as cofactor. Activated by phosphorylation.

It carries out the reaction alpha-D-glucosamine 1-phosphate = D-glucosamine 6-phosphate. Its function is as follows. Catalyzes the conversion of glucosamine-6-phosphate to glucosamine-1-phosphate. This is Phosphoglucosamine mutase from Listeria monocytogenes serovar 1/2a (strain ATCC BAA-679 / EGD-e).